Consider the following 822-residue polypeptide: Anaphase-promoting complex subunit 2 (822 aa).

A phosphoserine mark is found at serine 218, serine 314, serine 470, serine 534, and serine 697. A disordered region spans residues 450–495 (GDLAVELSKTDPASLETGQDSEDDSGEPEDWVPDPVDADPGKSSSK). Residues 468-481 (QDSEDDSGEPEDWV) are compositionally biased toward acidic residues. A cullin homology region spans residues 502-700 (ISLLVSIYGS…LLRRRMSVWL (199 aa)). Tyrosine 810 bears the Phosphotyrosine mark.

Belongs to the cullin family. As to quaternary structure, the mammalian APC/C is composed at least of 14 distinct subunits ANAPC1, ANAPC2, CDC27/APC3, ANAPC4, ANAPC5, CDC16/APC6, ANAPC7, CDC23/APC8, ANAPC10, ANAPC11, CDC26/APC12, ANAPC13, ANAPC15 and ANAPC16 that assemble into a complex of at least 19 chains with a combined molecular mass of around 1.2 MDa; APC/C interacts with FZR1 and FBXO5. In the context of the APC/C complex, directly interacts with UBE2C and UBE2S. Interacts (via cullin domain) with ANAPC11 and with UBCH10. Interacts with NEUROD2. Interacts with FBXO43; the interaction is direct.

It functions in the pathway protein modification; protein ubiquitination. Its function is as follows. Together with the RING-H2 protein ANAPC11, constitutes the catalytic component of the anaphase promoting complex/cyclosome (APC/C), a cell cycle-regulated E3 ubiquitin ligase that controls progression through mitosis and the G1 phase of the cell cycle. The APC/C complex acts by mediating ubiquitination and subsequent degradation of target proteins: it mainly mediates the formation of 'Lys-11'-linked polyubiquitin chains and, to a lower extent, the formation of 'Lys-48'- and 'Lys-63'-linked polyubiquitin chains. The APC/C complex catalyzes assembly of branched 'Lys-11'-/'Lys-48'-linked branched ubiquitin chains on target proteins. The CDC20-APC/C complex positively regulates the formation of synaptic vesicle clustering at active zone to the presynaptic membrane in postmitotic neurons. CDC20-APC/C-induced degradation of NEUROD2 drives presynaptic differentiation. The chain is Anaphase-promoting complex subunit 2 (ANAPC2) from Homo sapiens (Human).